Here is a 1058-residue protein sequence, read N- to C-terminus: Carbamoyl phosphate synthase large chain (1058 aa).

Residues 1–401 (MPKRKDIKTI…SLLKAIRSLE (401 aa)) are carboxyphosphate synthetic domain. The ATP site is built by Arg-129, Arg-169, Gly-175, Gly-176, Lys-208, Ile-210, Glu-215, Gly-241, Ile-242, His-243, Gln-284, and Glu-298. The 195-residue stretch at 133–327 (RDLMNELNEP…IAKIAAKIAV (195 aa)) folds into the ATP-grasp 1 domain. Positions 284, 298, and 300 each coordinate Mg(2+). Mn(2+)-binding residues include Gln-284, Glu-298, and Asn-300. The segment at 402–546 (YGVHHLGLPN…YSTYEFENES (145 aa)) is oligomerization domain. The segment at 547–929 (TRSDKEKIVV…ALYKGLTAAG (383 aa)) is carbamoyl phosphate synthetic domain. In terms of domain architecture, ATP-grasp 2 spans 671–861 (EKLLIGLKIP…VANIAMQCIL (191 aa)). ATP-binding residues include Arg-707, Arg-746, Leu-748, Glu-752, Gly-777, Val-778, His-779, Ser-780, Gln-820, and Glu-832. Mg(2+) is bound by residues Gln-820, Glu-832, and Asn-834. Residues Gln-820, Glu-832, and Asn-834 each coordinate Mn(2+). The MGS-like domain occupies 930–1058 (IKIKDYGRVL…ESMSFRVQTL (129 aa)). The allosteric domain stretch occupies residues 930–1058 (IKIKDYGRVL…ESMSFRVQTL (129 aa)).

It belongs to the CarB family. In terms of assembly, composed of two chains; the small (or glutamine) chain promotes the hydrolysis of glutamine to ammonia, which is used by the large (or ammonia) chain to synthesize carbamoyl phosphate. Tetramer of heterodimers (alpha,beta)4. Mg(2+) serves as cofactor. It depends on Mn(2+) as a cofactor.

It catalyses the reaction hydrogencarbonate + L-glutamine + 2 ATP + H2O = carbamoyl phosphate + L-glutamate + 2 ADP + phosphate + 2 H(+). The catalysed reaction is hydrogencarbonate + NH4(+) + 2 ATP = carbamoyl phosphate + 2 ADP + phosphate + 2 H(+). Its pathway is amino-acid biosynthesis; L-arginine biosynthesis; carbamoyl phosphate from bicarbonate: step 1/1. The protein operates within pyrimidine metabolism; UMP biosynthesis via de novo pathway; (S)-dihydroorotate from bicarbonate: step 1/3. Large subunit of the glutamine-dependent carbamoyl phosphate synthetase (CPSase). CPSase catalyzes the formation of carbamoyl phosphate from the ammonia moiety of glutamine, carbonate, and phosphate donated by ATP, constituting the first step of 2 biosynthetic pathways, one leading to arginine and/or urea and the other to pyrimidine nucleotides. The large subunit (synthetase) binds the substrates ammonia (free or transferred from glutamine from the small subunit), hydrogencarbonate and ATP and carries out an ATP-coupled ligase reaction, activating hydrogencarbonate by forming carboxy phosphate which reacts with ammonia to form carbamoyl phosphate. The protein is Carbamoyl phosphate synthase large chain of Fusobacterium nucleatum subsp. nucleatum (strain ATCC 25586 / DSM 15643 / BCRC 10681 / CIP 101130 / JCM 8532 / KCTC 2640 / LMG 13131 / VPI 4355).